Consider the following 218-residue polypeptide: Sodium channel regulatory subunit beta-1 (218 aa).

An N-terminal signal peptide occupies residues 1 to 18 (MGRLLALVVGAALVSSAC). Residues 19-157 (GGCVEVDSET…DKANRDMASI (139 aa)) lie on the Extracellular side of the membrane. Intrachain disulfides connect cysteine 21–cysteine 43 and cysteine 40–cysteine 121. The Ig-like C2-type domain occupies 22–150 (VEVDSETEAV…KIHIEVVDKA (129 aa)). 4 N-linked (GlcNAc...) asparagine glycosylation sites follow: asparagine 93, asparagine 110, asparagine 114, and asparagine 135. Residues 158 to 179 (VSEIMMYVLIVVLTIWLVAEMI) traverse the membrane as a helical segment. Over 180 to 218 (YCYKKIAAATETAAQENASEYLAITSESKENCTGVQVAE) the chain is Cytoplasmic.

The protein belongs to the sodium channel auxiliary subunit SCN1B (TC 8.A.17) family. In terms of assembly, voltage-gated sodium (Nav) channel consists of an ion-conducting pore-forming alpha subunit functional on its own that is regulated by one or more beta subunits. Interacts with SCN1A; regulatory subunit of SCN1A/Nav1.1. Interacts with SCN3A; regulatory subunit of SCN3A/Nav1.3. Interacts with SCN4A; regulatory subunit of SCN4A/Nav1.4. Interacts with SCN5A; regulatory subunit of SCN5A/Nav1.5. Interacts with SCN8A; regulatory subunit of SCN8A/Nav1.6. Interacts with SCN9A; regulatory subunit of SCN9A/Nav1.7. Interacts with SCN10A; regulatory subunit of SCN10A/Nav1.8. Interacts with NFASC. Interacts with TMEM65. The overall expression of isoform 1 and isoform 2 is very similar. Isoform 1 is abundantly expressed in skeletal muscle, heart and brain. Isoform 2 is highly expressed in brain and skeletal muscle and present at a very low level in heart, placenta, lung, liver, kidney and pancreas. In brain, isoform 2 is most abundant in the cerebellum, followed by the cerebral cortex and occipital lobe, while isoform 1 levels are higher in the cortex compared to the cerebellum. Isoform 2 is expressed in many regions of the brain, including cerebellar Purkinje cells, cortex pyramidal neurons and many of the neuronal fibers throughout the brain (at protein level). Also detected in dorsal root ganglion, in fibers of the spinal nerve and in cortical neurons and their processes (at protein level).

It localises to the cell membrane. The protein resides in the perikaryon. It is found in the cell projection. The protein localises to the axon. Its subcellular location is the secreted. Functionally, regulatory subunit of multiple voltage-gated sodium (Nav) channels directly mediating the depolarization of excitable membranes. Navs, also called VGSCs (voltage-gated sodium channels) or VDSCs (voltage-dependent sodium channels), operate by switching between closed and open conformations depending on the voltage difference across the membrane. In the open conformation they allow Na(+) ions to selectively pass through the pore, along their electrochemical gradient. The influx of Na+ ions provokes membrane depolarization, initiating the propagation of electrical signals throughout cells and tissues. The accessory beta subunits participate in localization and functional modulation of the Nav channels. Modulates the activity of SCN1A/Nav1.1, SCN2A/Nav1.2, SCN3A/Nav1.3, SCN4A/Nav1.4, SCN5A/Nav1.5, SCN8A/Nav1.6, SCN9A/Nav1.7 and SCN10A/Nav1.8. In terms of biological role, cell adhesion molecule that plays a critical role in neuronal migration and pathfinding during brain development. Stimulates neurite outgrowth. Has no regulatory function on the SCN2A sodium channel complex. The chain is Sodium channel regulatory subunit beta-1 from Homo sapiens (Human).